The sequence spans 552 residues: C-type lectin receptor-like tyrosine-protein kinase At1g52310 (552 aa).

The first 27 residues, 1–27 (MELKWVSCRKQSLFLISCLALLCLASL), serve as a signal peptide directing secretion. Over 28–201 (DTISCESTQN…DIKCRNCHKY (174 aa)) the chain is Extracellular. N-linked (GlcNAc...) asparagine glycosylation is found at asparagine 37, asparagine 59, asparagine 69, asparagine 106, asparagine 118, asparagine 137, asparagine 154, asparagine 169, and asparagine 180. Positions 59-188 (NQTKCYAYFK…CNASHAFVCA (130 aa)) constitute a C-type lectin domain. 2 disulfides stabilise this stretch: cysteine 80-cysteine 187 and cysteine 164-cysteine 179. The chain crosses the membrane as a helical span at residues 202–222 (LVILAVVSGLILFTTFAIILW). Over 223-552 (LLVYKRSKKR…QQLVQPLEVK (330 aa)) the chain is Cytoplasmic. One can recognise a Protein kinase domain in the interval 268–546 (SEANRLAGDA…HVVHQLQQLV (279 aa)). ATP contacts are provided by residues 274–282 (AGDAKTGGT) and lysine 296. Aspartate 394 acts as the Proton acceptor in catalysis.

This sequence belongs to the protein kinase superfamily. Tyr protein kinase family.

The protein localises to the cell membrane. The catalysed reaction is L-tyrosyl-[protein] + ATP = O-phospho-L-tyrosyl-[protein] + ADP + H(+). This chain is C-type lectin receptor-like tyrosine-protein kinase At1g52310, found in Arabidopsis thaliana (Mouse-ear cress).